The sequence spans 293 residues: Acetylglutamate kinase (293 aa).

Substrate-binding positions include 68–69 (GG), arginine 90, and asparagine 189.

It belongs to the acetylglutamate kinase family. ArgB subfamily.

The protein resides in the cytoplasm. The catalysed reaction is N-acetyl-L-glutamate + ATP = N-acetyl-L-glutamyl 5-phosphate + ADP. It functions in the pathway amino-acid biosynthesis; L-arginine biosynthesis; N(2)-acetyl-L-ornithine from L-glutamate: step 2/4. In terms of biological role, catalyzes the ATP-dependent phosphorylation of N-acetyl-L-glutamate. This Mycobacterium ulcerans (strain Agy99) protein is Acetylglutamate kinase.